A 91-amino-acid polypeptide reads, in one-letter code: DNA-directed RNA polymerase subunit omega (91 aa).

This sequence belongs to the RNA polymerase subunit omega family. In terms of assembly, the RNAP catalytic core consists of 2 alpha, 1 beta, 1 beta' and 1 omega subunit. When a sigma factor is associated with the core the holoenzyme is formed, which can initiate transcription. The rRNA transcription and antitermination complex (rrnTAC) consists of RNAP, NusA, NusB, NusE (rpsJ), NusG, SubB, ribosomal protein S4, DNA and precursor rRNA; S4 is more flexible than other subunits.

The catalysed reaction is RNA(n) + a ribonucleoside 5'-triphosphate = RNA(n+1) + diphosphate. Functionally, promotes RNA polymerase (RNAP) assembly. Latches the N- and C-terminal regions of the beta' subunit thereby facilitating its interaction with the beta and alpha subunits. Part of the processive rRNA transcription and antitermination complex (rrnTAC). The complex forms an RNA-chaperone ring around the RNA exit tunnel of RNAP. It supports rapid transcription and antitermination of rRNA operons, cotranscriptional rRNA folding, and annealing of distal rRNA regions to allow correct ribosome biogenesis. This chain is DNA-directed RNA polymerase subunit omega (rpoZ), found in Escherichia coli (strain K12).